The chain runs to 88 residues: Transmembrane protein 069R (88 aa).

2 consecutive transmembrane segments (helical) span residues 30–50 (ALWPPALAYAASVAAGYVFTA) and 67–87 (VGVFLGVLCALYNWMGSGDSF).

The protein localises to the host membrane. The chain is Transmembrane protein 069R from Frog virus 3 (isolate Goorha) (FV-3).